Here is a 171-residue protein sequence, read N- to C-terminus: Small ribosomal subunit protein uS5 (171 aa).

Residues 12–75 (LKEKLISVNR…EKARRNMIQV (64 aa)) form the S5 DRBM domain.

It belongs to the universal ribosomal protein uS5 family. In terms of assembly, part of the 30S ribosomal subunit. Contacts proteins S4 and S8.

With S4 and S12 plays an important role in translational accuracy. In terms of biological role, located at the back of the 30S subunit body where it stabilizes the conformation of the head with respect to the body. The sequence is that of Small ribosomal subunit protein uS5 from Buchnera aphidicola subsp. Baizongia pistaciae (strain Bp).